A 199-amino-acid polypeptide reads, in one-letter code: Auxin-responsive protein IAA1 (199 aa).

Positions 25–29 match the EAR-like (transcriptional repression) motif; that stretch reads LTLRL. The interval 31 to 74 is disordered; that stretch reads GSLAAAAAPDPDRKRSSPSSSDAADAADNSSPLAAAADAPPAPK. Low complexity predominate over residues 47–69; sequence SPSSSDAADAADNSSPLAAAADA. The 95-residue stretch at 93-187 folds into the PB1 domain; sequence AKFVKVAVDG…TCQRLRLMKS (95 aa).

This sequence belongs to the Aux/IAA family. As to quaternary structure, homodimers and heterodimers. In terms of tissue distribution, highly expressed in flowers. Expressed at low levels in roots and shoots.

It localises to the nucleus. Aux/IAA proteins are short-lived transcriptional factors that function as repressors of early auxin response genes at low auxin concentrations. In Oryza sativa subsp. japonica (Rice), this protein is Auxin-responsive protein IAA1 (IAA1).